We begin with the raw amino-acid sequence, 76 residues long: Small ribosomal subunit protein bS18 (76 aa).

The protein belongs to the bacterial ribosomal protein bS18 family. As to quaternary structure, part of the 30S ribosomal subunit. Forms a tight heterodimer with protein bS6.

Its function is as follows. Binds as a heterodimer with protein bS6 to the central domain of the 16S rRNA, where it helps stabilize the platform of the 30S subunit. The sequence is that of Small ribosomal subunit protein bS18 from Alcanivorax borkumensis (strain ATCC 700651 / DSM 11573 / NCIMB 13689 / SK2).